The chain runs to 210 residues: Large ribosomal subunit protein uL3 (210 aa).

The protein belongs to the universal ribosomal protein uL3 family. Part of the 50S ribosomal subunit. Forms a cluster with proteins L14 and L19.

Functionally, one of the primary rRNA binding proteins, it binds directly near the 3'-end of the 23S rRNA, where it nucleates assembly of the 50S subunit. This chain is Large ribosomal subunit protein uL3, found in Natranaerobius thermophilus (strain ATCC BAA-1301 / DSM 18059 / JW/NM-WN-LF).